The sequence spans 414 residues: uncharacterized protein (414 aa).

Belongs to the glycosyltransferase 28 family.

This is an uncharacterized protein from Mycobacterium tuberculosis (strain CDC 1551 / Oshkosh).